Here is a 106-residue protein sequence, read N- to C-terminus: MADFLGMMKQAAQLQSKMKAMQAELDQIEVEGSSGGGLVQVRMSAKMEVRGVSIDPSLLKPDEGGVLEDLLVAAHADAHRKAEAAMQEKMQALTGGLGLPPGLGLG.

Belongs to the YbaB/EbfC family. In terms of assembly, homodimer.

Its subcellular location is the cytoplasm. It localises to the nucleoid. Binds to DNA and alters its conformation. May be involved in regulation of gene expression, nucleoid organization and DNA protection. The polypeptide is Nucleoid-associated protein RPD_0086 (Rhodopseudomonas palustris (strain BisB5)).